A 428-amino-acid chain; its full sequence is Serine hydroxymethyltransferase (428 aa).

Residues leucine 127 and 131–133 (GHL) contribute to the (6S)-5,6,7,8-tetrahydrofolate site. The residue at position 236 (lysine 236) is an N6-(pyridoxal phosphate)lysine.

It belongs to the SHMT family. Homodimer. The cofactor is pyridoxal 5'-phosphate.

The protein localises to the cytoplasm. It carries out the reaction (6R)-5,10-methylene-5,6,7,8-tetrahydrofolate + glycine + H2O = (6S)-5,6,7,8-tetrahydrofolate + L-serine. It participates in one-carbon metabolism; tetrahydrofolate interconversion. Its pathway is amino-acid biosynthesis; glycine biosynthesis; glycine from L-serine: step 1/1. Catalyzes the reversible interconversion of serine and glycine with tetrahydrofolate (THF) serving as the one-carbon carrier. This reaction serves as the major source of one-carbon groups required for the biosynthesis of purines, thymidylate, methionine, and other important biomolecules. Also exhibits THF-independent aldolase activity toward beta-hydroxyamino acids, producing glycine and aldehydes, via a retro-aldol mechanism. This Tropheryma whipplei (strain TW08/27) (Whipple's bacillus) protein is Serine hydroxymethyltransferase.